A 343-amino-acid chain; its full sequence is Small ribosomal subunit biogenesis GTPase RsgA (343 aa).

Residues 116–275 (RGQLKPVAAN…LIDSPGIREF (160 aa)) form the CP-type G domain. GTP-binding positions include 163–166 (NKAD) and 217–225 (GQSGVGKSS). Positions 299, 304, 306, and 312 each coordinate Zn(2+).

This sequence belongs to the TRAFAC class YlqF/YawG GTPase family. RsgA subfamily. Monomer. Associates with 30S ribosomal subunit, binds 16S rRNA. Zn(2+) is required as a cofactor.

It is found in the cytoplasm. Functionally, one of several proteins that assist in the late maturation steps of the functional core of the 30S ribosomal subunit. Helps release RbfA from mature subunits. May play a role in the assembly of ribosomal proteins into the subunit. Circularly permuted GTPase that catalyzes slow GTP hydrolysis, GTPase activity is stimulated by the 30S ribosomal subunit. The protein is Small ribosomal subunit biogenesis GTPase RsgA of Pseudomonas syringae pv. tomato (strain ATCC BAA-871 / DC3000).